Consider the following 73-residue polypeptide: MKIITRGEAMRIHQQHPTSRLFPFCTGKYRWHGSAEAYTGREVQDIPGVLAVFAERRKDSFGPYVRLMSVTLN.

The protein belongs to the YeeT/YkfH/YpjJ family.

This is an uncharacterized protein from Escherichia coli O157:H7.